The sequence spans 569 residues: Formate--tetrahydrofolate ligase (569 aa).

Residue 64 to 71 (TPHGEGKT) participates in ATP binding.

It belongs to the formate--tetrahydrofolate ligase family.

It carries out the reaction (6S)-5,6,7,8-tetrahydrofolate + formate + ATP = (6R)-10-formyltetrahydrofolate + ADP + phosphate. It functions in the pathway one-carbon metabolism; tetrahydrofolate interconversion. The chain is Formate--tetrahydrofolate ligase from Shewanella sp. (strain MR-7).